The primary structure comprises 441 residues: MAGUK p55 subfamily member 4 (441 aa).

The 84-residue stretch at 1-84 folds into the PDZ domain; that stretch reads MRTVCLVKNQ…TIMFKVIPVS (84 aa). Positions 91–161 constitute an SH3 domain; the sequence is QTTVYVRAMI…PSNHLLKRKQ (71 aa). The 190-residue stretch at 232–421 folds into the Guanylate kinase-like domain; sequence HRLIVLVGPS…ARAQLLSAIQ (190 aa). Residues 373 to 430 are a coiled coil; sequence VDMKFKDEDLQEMEELAQKMESQFGQFFDHVIVNDNLQDARAQLLSAIQKAEEELQWV.

It belongs to the MAGUK family. Interacts with MPDZ. May interact with GRIA2. Forms a complex with CRB1 and PALS1. Interacts with FASLG. Highly expressed in brain and detected in lung, and bone (at protein level). Also expressed in intestine and spleen.

It localises to the cytoplasm. Functionally, may play a role in retinal photoreceptors development. The protein is MAGUK p55 subfamily member 4 (Mpp4) of Rattus norvegicus (Rat).